A 369-amino-acid chain; its full sequence is Deoxyuridine 5'-triphosphate nucleotidohydrolase (369 aa).

Substrate is bound by residues 258-260 (RSS) and 364-365 (FG).

This sequence belongs to the dUTPase family. The cofactor is Mg(2+).

It catalyses the reaction dUTP + H2O = dUMP + diphosphate + H(+). In terms of biological role, involved in nucleotide metabolism: produces dUMP, the immediate precursor of thymidine nucleotides and decreases the intracellular concentration of dUTP to avoid uracil incorporation into viral DNA. This Homo sapiens (Human) protein is Deoxyuridine 5'-triphosphate nucleotidohydrolase.